Here is a 756-residue protein sequence, read N- to C-terminus: NADP-dependent malic enzyme (756 aa).

Residues 1-428 form a malic enzyme region; the sequence is MTEQLRQAAL…KLTQFVYKTS (428 aa). Catalysis depends on Y39, which acts as the Proton donor. The Proton acceptor role is filled by K94. Residues E136, D137, and D162 each coordinate a divalent metal cation. NADP(+) is bound by residues 195–198, N288, and N320; that span reads AGAA. The tract at residues 429–756 is phosphate acetyltransferase; sequence LFMRPIFSQA…AYAAVKAQQE (328 aa).

This sequence in the N-terminal section; belongs to the malic enzymes family. In the C-terminal section; belongs to the phosphate acetyltransferase and butyryltransferase family. The cofactor is Mg(2+). Requires Mn(2+) as cofactor.

The catalysed reaction is (S)-malate + NADP(+) = pyruvate + CO2 + NADPH. It catalyses the reaction oxaloacetate + H(+) = pyruvate + CO2. The polypeptide is NADP-dependent malic enzyme (maeB) (Haemophilus influenzae (strain ATCC 51907 / DSM 11121 / KW20 / Rd)).